Reading from the N-terminus, the 543-residue chain is 2,3-bisphosphoglycerate-independent phosphoglycerate mutase (543 aa).

Mn(2+)-binding residues include Asp20 and Ser73. Catalysis depends on Ser73, which acts as the Phosphoserine intermediate. Substrate-binding positions include His134, 166–167 (RD), Arg198, Arg204, 278–281 (RGDR), and Lys360. Positions 428, 432, 469, 470, and 488 each coordinate Mn(2+).

This sequence belongs to the BPG-independent phosphoglycerate mutase family. Monomer. Mn(2+) is required as a cofactor.

The catalysed reaction is (2R)-2-phosphoglycerate = (2R)-3-phosphoglycerate. Its pathway is carbohydrate degradation; glycolysis; pyruvate from D-glyceraldehyde 3-phosphate: step 3/5. In terms of biological role, catalyzes the interconversion of 2-phosphoglycerate and 3-phosphoglycerate. The protein is 2,3-bisphosphoglycerate-independent phosphoglycerate mutase of Rhodopirellula baltica (strain DSM 10527 / NCIMB 13988 / SH1).